Reading from the N-terminus, the 1468-residue chain is Neuropathy target esterase sws (1468 aa).

The Lumenal segment spans residues 1-34 (MDVLEMLRASASGSYNTIFSDAWCQYVSKQITAT). The helical transmembrane segment at 35–55 (VYMYCALVMMSLLFIAWFLYF) threads the bilayer. Over 56 to 1468 (KRMARLRLRD…RSSPNNETKN (1413 aa)) the chain is Cytoplasmic. 174-301 (IFGHFEKPVF…IRVIQVIMIR (128 aa)) lines the a nucleoside 3',5'-cyclic phosphate pocket. 2 stretches are compositionally biased toward polar residues: residues 332–348 (TMSGPINSQTSQSSRQA) and 357–366 (NQLNLMQSAA). Positions 332–411 (TMSGPINSQT…DGSFHGTTNL (80 aa)) are disordered. Phosphoserine occurs at positions 442 and 451. A nucleoside 3',5'-cyclic phosphate is bound by residues 480–607 (ELGL…VVRR) and 596–723 (IVLD…LSHR). Positions 950–1116 (LVLGGGGARG…VNNLPGHLWR (167 aa)) constitute a PNPLA domain. The short motif at 954–959 (GGGARG) is the GXGXXG element. A GXSXG motif is present at residues 981-985 (GVSIG). The active-site Nucleophile is the serine 983. Aspartate 1103 serves as the catalytic Proton acceptor. A DGA/G motif is present at residues 1103–1105 (DGG). Serine 1197 is modified (phosphoserine). The disordered stretch occupies residues 1368 to 1468 (ERKMDKSTQS…RSSPNNETKN (101 aa)). The segment covering 1374-1383 (STQSSPPTSS) has biased composition (low complexity). The segment covering 1385-1395 (TDMRGKEEAKH) has biased composition (basic and acidic residues). Residues 1419 to 1441 (TQTGQEQELQQQQKLQQLQQDQG) are compositionally biased toward low complexity. Positions 1446 to 1459 (QLVDKDKEEDKENR) are enriched in basic and acidic residues.

The protein belongs to the NTE family. As to quaternary structure, interacts with Pka-C3; interaction inhibits the catalytic function of Pka-C3 and the esterase activity of sws.

It is found in the endoplasmic reticulum membrane. The catalysed reaction is a 1-acyl-sn-glycero-3-phosphocholine + H2O = sn-glycerol 3-phosphocholine + a fatty acid + H(+). In terms of biological role, phospholipase B that deacylates intracellular phosphatidylcholine (PtdCho), generating glycerophosphocholine (GroPtdCho). This deacylation occurs at both sn-2 and sn-1 positions of PtdCho. Its specific chemical modification by certain organophosphorus (OP) compounds leads to distal axonopathy. Plays a role in the signaling mechanism between neurons and glia that regulates glia wrapping during development of the adult brain. Essential for membrane lipid homeostasis and cell survival in both neurons and glia of the adult brain. The chain is Neuropathy target esterase sws from Drosophila sechellia (Fruit fly).